The sequence spans 424 residues: Probable aminotransferase TAT4 (424 aa).

The protein belongs to the class-I pyridoxal-phosphate-dependent aminotransferase family. It depends on pyridoxal 5'-phosphate as a cofactor.

This chain is Probable aminotransferase TAT4, found in Arabidopsis thaliana (Mouse-ear cress).